Consider the following 454-residue polypeptide: UDP-N-acetylmuramate--L-alanine ligase (454 aa).

Residue 112 to 118 coordinates ATP; it reads GTHGKTT.

Belongs to the MurCDEF family.

It localises to the cytoplasm. The enzyme catalyses UDP-N-acetyl-alpha-D-muramate + L-alanine + ATP = UDP-N-acetyl-alpha-D-muramoyl-L-alanine + ADP + phosphate + H(+). It functions in the pathway cell wall biogenesis; peptidoglycan biosynthesis. Functionally, cell wall formation. The polypeptide is UDP-N-acetylmuramate--L-alanine ligase (Oleidesulfovibrio alaskensis (strain ATCC BAA-1058 / DSM 17464 / G20) (Desulfovibrio alaskensis)).